We begin with the raw amino-acid sequence, 789 residues long: Larval serum protein 1 beta chain (789 aa).

A signal peptide spans methionine 1–alanine 16.

The protein belongs to the hemocyanin family. Heterohexamer, composed of three subunits, alpha, beta and gamma. As to expression, larval hemolymph.

The protein localises to the secreted. It localises to the extracellular space. Larval storage protein (LSP) which may serve as a store of amino acids for synthesis of adult proteins. This Drosophila melanogaster (Fruit fly) protein is Larval serum protein 1 beta chain (Lsp1beta).